The chain runs to 243 residues: Pyridoxine 5'-phosphate synthase (243 aa).

Residue asparagine 9 coordinates 3-amino-2-oxopropyl phosphate. 11–12 (DH) is a 1-deoxy-D-xylulose 5-phosphate binding site. Arginine 20 serves as a coordination point for 3-amino-2-oxopropyl phosphate. Histidine 45 acts as the Proton acceptor in catalysis. Residues arginine 47 and histidine 52 each coordinate 1-deoxy-D-xylulose 5-phosphate. The active-site Proton acceptor is the glutamate 72. 1-deoxy-D-xylulose 5-phosphate is bound at residue threonine 102. Histidine 193 functions as the Proton donor in the catalytic mechanism. Residues glycine 194 and 215 to 216 (GH) contribute to the 3-amino-2-oxopropyl phosphate site.

It belongs to the PNP synthase family. In terms of assembly, homooctamer; tetramer of dimers.

The protein resides in the cytoplasm. It carries out the reaction 3-amino-2-oxopropyl phosphate + 1-deoxy-D-xylulose 5-phosphate = pyridoxine 5'-phosphate + phosphate + 2 H2O + H(+). It functions in the pathway cofactor biosynthesis; pyridoxine 5'-phosphate biosynthesis; pyridoxine 5'-phosphate from D-erythrose 4-phosphate: step 5/5. Catalyzes the complicated ring closure reaction between the two acyclic compounds 1-deoxy-D-xylulose-5-phosphate (DXP) and 3-amino-2-oxopropyl phosphate (1-amino-acetone-3-phosphate or AAP) to form pyridoxine 5'-phosphate (PNP) and inorganic phosphate. This chain is Pyridoxine 5'-phosphate synthase, found in Salmonella typhi.